A 1049-amino-acid polypeptide reads, in one-letter code: Solvent-resistant pump membrane transporter SrpB (1049 aa).

Helical transmembrane passes span 10–30 (IFAW…LAKM), 339–359 (SVVH…YLFL), 366–386 (LIPT…LPYF), 392–412 (VLTM…AIVV), 440–460 (GALV…AFFG), 470–490 (FAIT…VFTP), 542–562 (LAFL…PKAF), 871–891 (APLL…ALYE), 895–915 (VPVS…LATL), 927–947 (VGLM…VEFA), 973–993 (ILMT…ASGA), and 1008–1028 (GMIT…VVVV).

Belongs to the resistance-nodulation-cell division (RND) (TC 2.A.6) family.

It is found in the cell inner membrane. The inner membrane transporter component of an organic solvent efflux pump. Involved in export of a number of low log POW compounds including hexane (log POW 3.5), toluene (log POW 2.5) and dimethylphthalate (log POW 2.3). The solvent resistance phenotype has been postulated to depend on the operon expression level. This is Solvent-resistant pump membrane transporter SrpB (srpB) from Pseudomonas putida (Arthrobacter siderocapsulatus).